The sequence spans 72 residues: Cell division protein ZapB (72 aa).

A coiled-coil region spans residues methionine 1 to valine 72.

This sequence belongs to the ZapB family. In terms of assembly, homodimer. The ends of the coiled-coil dimer bind to each other, forming polymers. Interacts with FtsZ.

Its subcellular location is the cytoplasm. In terms of biological role, non-essential, abundant cell division factor that is required for proper Z-ring formation. It is recruited early to the divisome by direct interaction with FtsZ, stimulating Z-ring assembly and thereby promoting cell division earlier in the cell cycle. Its recruitment to the Z-ring requires functional FtsA or ZipA. This Actinobacillus succinogenes (strain ATCC 55618 / DSM 22257 / CCUG 43843 / 130Z) protein is Cell division protein ZapB.